The primary structure comprises 163 residues: NADH-quinone oxidoreductase subunit I (163 aa).

4Fe-4S ferredoxin-type domains are found at residues 54–84 and 94–123; these read LRRYPNGEERCIACKLCEAVCPANAITIESE and IVYDIDLFKCIFCGFCEEACPVDAIVETQI. [4Fe-4S] cluster contacts are provided by Cys-64, Cys-67, Cys-70, Cys-74, Cys-103, Cys-106, Cys-109, and Cys-113.

It belongs to the complex I 23 kDa subunit family. NDH-1 is composed of 14 different subunits. Subunits NuoA, H, J, K, L, M, N constitute the membrane sector of the complex. [4Fe-4S] cluster is required as a cofactor.

The protein localises to the cell inner membrane. It catalyses the reaction a quinone + NADH + 5 H(+)(in) = a quinol + NAD(+) + 4 H(+)(out). NDH-1 shuttles electrons from NADH, via FMN and iron-sulfur (Fe-S) centers, to quinones in the respiratory chain. The immediate electron acceptor for the enzyme in this species is believed to be ubiquinone. Couples the redox reaction to proton translocation (for every two electrons transferred, four hydrogen ions are translocated across the cytoplasmic membrane), and thus conserves the redox energy in a proton gradient. This is NADH-quinone oxidoreductase subunit I from Ruthia magnifica subsp. Calyptogena magnifica.